The chain runs to 1057 residues: Nuclear RNAi defective-3 protein (1057 aa).

Disordered stretches follow at residues 1 to 89 (MDLL…GLSV) and 344 to 388 (LTNS…ERTV). Residues 17–30 (STAKKPATSASSTP) are compositionally biased toward low complexity. Composition is skewed to basic and acidic residues over residues 67–81 (PKREHTDRTGPDPKR) and 356–388 (GGRERRDGGGNSRKYDDRRSPRDGEIDYDERTV). The region spanning 387–500 (TVSHYQRQFQ…YPMELMSILP (114 aa)) is the PAZ domain. A Piwi domain is found at 677-1001 (GIIAEKRPDM…LAKRGHNNYK (325 aa)).

Its subcellular location is the cytoplasm. The protein localises to the nucleus. Functionally, transports small interfering RNAs (siRNAs) from the cytoplasm to the nucleus. Required for RNA interference (RNAi) in nuclei. Required for exogenous RNAi-induced H3K27 methylation. The polypeptide is Nuclear RNAi defective-3 protein (nrde-3) (Caenorhabditis elegans).